We begin with the raw amino-acid sequence, 295 residues long: Bifunctional protein FolD (295 aa).

NADP(+) contacts are provided by residues Gly-175–Ser-177 and Ile-243.

This sequence belongs to the tetrahydrofolate dehydrogenase/cyclohydrolase family. Homodimer.

It catalyses the reaction (6R)-5,10-methylene-5,6,7,8-tetrahydrofolate + NADP(+) = (6R)-5,10-methenyltetrahydrofolate + NADPH. It carries out the reaction (6R)-5,10-methenyltetrahydrofolate + H2O = (6R)-10-formyltetrahydrofolate + H(+). It functions in the pathway one-carbon metabolism; tetrahydrofolate interconversion. Its function is as follows. Catalyzes the oxidation of 5,10-methylenetetrahydrofolate to 5,10-methenyltetrahydrofolate and then the hydrolysis of 5,10-methenyltetrahydrofolate to 10-formyltetrahydrofolate. The protein is Bifunctional protein FolD of Xylella fastidiosa (strain 9a5c).